The chain runs to 70 residues: NADH dehydrogenase [ubiquinone] 1 alpha subcomplex subunit 1 (70 aa).

A helical transmembrane segment spans residues 1-21 (MWFEILPGLSVMGVCLLIPGL).

Belongs to the complex I NDUFA1 subunit family. As to quaternary structure, complex I is composed of 45 different subunits. Primarily expressed in heart and skeletal muscle.

It is found in the mitochondrion inner membrane. Accessory subunit of the mitochondrial membrane respiratory chain NADH dehydrogenase (Complex I), that is believed not to be involved in catalysis. Complex I functions in the transfer of electrons from NADH to the respiratory chain. The immediate electron acceptor for the enzyme is believed to be ubiquinone. This Homo sapiens (Human) protein is NADH dehydrogenase [ubiquinone] 1 alpha subcomplex subunit 1 (NDUFA1).